The primary structure comprises 301 residues: Acetylglutamate kinase (301 aa).

Residues 71-72 (GG), R93, and N198 each bind substrate.

This sequence belongs to the acetylglutamate kinase family. ArgB subfamily.

The protein resides in the cytoplasm. It catalyses the reaction N-acetyl-L-glutamate + ATP = N-acetyl-L-glutamyl 5-phosphate + ADP. Its pathway is amino-acid biosynthesis; L-arginine biosynthesis; N(2)-acetyl-L-ornithine from L-glutamate: step 2/4. Catalyzes the ATP-dependent phosphorylation of N-acetyl-L-glutamate. The protein is Acetylglutamate kinase of Zymomonas mobilis subsp. mobilis (strain ATCC 31821 / ZM4 / CP4).